A 97-amino-acid polypeptide reads, in one-letter code: Aspartyl/glutamyl-tRNA(Asn/Gln) amidotransferase subunit C (97 aa).

Residues 74-97 form a disordered region; that stretch reads AEQALDQAPASQRDRFEVPRILGE. The span at 85-97 shows a compositional bias: basic and acidic residues; the sequence is QRDRFEVPRILGE.

The protein belongs to the GatC family. As to quaternary structure, heterotrimer of A, B and C subunits.

The catalysed reaction is L-glutamyl-tRNA(Gln) + L-glutamine + ATP + H2O = L-glutaminyl-tRNA(Gln) + L-glutamate + ADP + phosphate + H(+). The enzyme catalyses L-aspartyl-tRNA(Asn) + L-glutamine + ATP + H2O = L-asparaginyl-tRNA(Asn) + L-glutamate + ADP + phosphate + 2 H(+). Its function is as follows. Allows the formation of correctly charged Asn-tRNA(Asn) or Gln-tRNA(Gln) through the transamidation of misacylated Asp-tRNA(Asn) or Glu-tRNA(Gln) in organisms which lack either or both of asparaginyl-tRNA or glutaminyl-tRNA synthetases. The reaction takes place in the presence of glutamine and ATP through an activated phospho-Asp-tRNA(Asn) or phospho-Glu-tRNA(Gln). The sequence is that of Aspartyl/glutamyl-tRNA(Asn/Gln) amidotransferase subunit C from Corynebacterium kroppenstedtii (strain DSM 44385 / JCM 11950 / CIP 105744 / CCUG 35717).